Consider the following 113-residue polypeptide: Small ribosomal subunit protein uS17 (113 aa).

It belongs to the universal ribosomal protein uS17 family. Part of the 30S ribosomal subunit.

Its function is as follows. One of the primary rRNA binding proteins, it binds specifically to the 5'-end of 16S ribosomal RNA. The protein is Small ribosomal subunit protein uS17 of Sulfurisphaera tokodaii (strain DSM 16993 / JCM 10545 / NBRC 100140 / 7) (Sulfolobus tokodaii).